The chain runs to 520 residues: Cytochrome b5 reductase 4 (520 aa).

N-acetylmethionine is present on M1. The interval M1–P27 is disordered. Over residues G13–R23 the composition is skewed to polar residues. A Cytochrome b5 heme-binding domain is found at L54–A130. H89 and H112 together coordinate heme. Residues P164–G255 form the CS domain. The FAD-binding FR-type domain maps to L272–S384. Residues D364 to G379 and D391 to L423 each bind FAD.

The protein belongs to the flavoprotein pyridine nucleotide cytochrome reductase family. FAD serves as cofactor. Isoform 2 is expressed in testis, brain, skeletal muscle and in the male germline.

The protein resides in the endoplasmic reticulum. The catalysed reaction is 2 Fe(III)-[cytochrome b5] + NADH = 2 Fe(II)-[cytochrome b5] + NAD(+) + H(+). NADH-cytochrome b5 reductase involved in endoplasmic reticulum stress response pathway. Plays a critical role in protecting pancreatic beta-cells against oxidant stress, possibly by protecting the cell from excess buildup of reactive oxygen species (ROS). The protein is Cytochrome b5 reductase 4 (Cyb5r4) of Rattus norvegicus (Rat).